The following is a 350-amino-acid chain: Biotin synthase (350 aa).

A Radical SAM core domain is found at 38–262 (RQVQVSTLLS…MMPTSYVRLS (225 aa)). Cys53, Cys57, and Cys60 together coordinate [4Fe-4S] cluster. [2Fe-2S] cluster is bound by residues Cys97, Cys128, Cys188, and Arg260.

This sequence belongs to the radical SAM superfamily. Biotin synthase family. Homodimer. [4Fe-4S] cluster is required as a cofactor. [2Fe-2S] cluster serves as cofactor.

It catalyses the reaction (4R,5S)-dethiobiotin + (sulfur carrier)-SH + 2 reduced [2Fe-2S]-[ferredoxin] + 2 S-adenosyl-L-methionine = (sulfur carrier)-H + biotin + 2 5'-deoxyadenosine + 2 L-methionine + 2 oxidized [2Fe-2S]-[ferredoxin]. It participates in cofactor biosynthesis; biotin biosynthesis; biotin from 7,8-diaminononanoate: step 2/2. Catalyzes the conversion of dethiobiotin (DTB) to biotin by the insertion of a sulfur atom into dethiobiotin via a radical-based mechanism. The polypeptide is Biotin synthase (Yersinia enterocolitica serotype O:8 / biotype 1B (strain NCTC 13174 / 8081)).